The chain runs to 217 residues: Thiamine-phosphate synthase (217 aa).

Residues 44–48 (QYREK) and Asn76 contribute to the 4-amino-2-methyl-5-(diphosphooxymethyl)pyrimidine site. Mg(2+)-binding residues include Asp77 and Asp96. A 4-amino-2-methyl-5-(diphosphooxymethyl)pyrimidine-binding site is contributed by Ser115. 2-[(2R,5Z)-2-carboxy-4-methylthiazol-5(2H)-ylidene]ethyl phosphate is bound at residue 141-143 (TKT). Lys144 contributes to the 4-amino-2-methyl-5-(diphosphooxymethyl)pyrimidine binding site. Residues Gly172 and 192-193 (VS) each bind 2-[(2R,5Z)-2-carboxy-4-methylthiazol-5(2H)-ylidene]ethyl phosphate.

It belongs to the thiamine-phosphate synthase family. Requires Mg(2+) as cofactor.

It catalyses the reaction 2-[(2R,5Z)-2-carboxy-4-methylthiazol-5(2H)-ylidene]ethyl phosphate + 4-amino-2-methyl-5-(diphosphooxymethyl)pyrimidine + 2 H(+) = thiamine phosphate + CO2 + diphosphate. It carries out the reaction 2-(2-carboxy-4-methylthiazol-5-yl)ethyl phosphate + 4-amino-2-methyl-5-(diphosphooxymethyl)pyrimidine + 2 H(+) = thiamine phosphate + CO2 + diphosphate. The catalysed reaction is 4-methyl-5-(2-phosphooxyethyl)-thiazole + 4-amino-2-methyl-5-(diphosphooxymethyl)pyrimidine + H(+) = thiamine phosphate + diphosphate. Its pathway is cofactor biosynthesis; thiamine diphosphate biosynthesis; thiamine phosphate from 4-amino-2-methyl-5-diphosphomethylpyrimidine and 4-methyl-5-(2-phosphoethyl)-thiazole: step 1/1. Condenses 4-methyl-5-(beta-hydroxyethyl)thiazole monophosphate (THZ-P) and 2-methyl-4-amino-5-hydroxymethyl pyrimidine pyrophosphate (HMP-PP) to form thiamine monophosphate (TMP). In Lawsonia intracellularis (strain PHE/MN1-00), this protein is Thiamine-phosphate synthase.